The following is a 460-amino-acid chain: Elongation factor 1-alpha (460 aa).

Gly2 is subject to N,N,N-trimethylglycine. Lys3 carries the post-translational modification N6,N6-dimethyllysine; alternate. The residue at position 3 (Lys3) is an N6-methyllysine; alternate. Positions 6–241 (KQHINIVVIG…DAIEPPVRPT (236 aa)) constitute a tr-type G domain. A G1 region spans residues 15-22 (GHVDSGKS). Position 15–22 (15–22 (GHVDSGKS)) interacts with GTP. At Lys31 the chain carries N6-methyllysine. The G2 stretch occupies residues 71–75 (GITID). Residue Lys80 is modified to N6,N6,N6-trimethyllysine. The segment at 92–95 (DAPG) is G3. GTP-binding positions include 92–96 (DAPGH) and 154–157 (NKMD). Positions 154-157 (NKMD) are G4. The interval 193 to 195 (SGF) is G5. At Lys317 the chain carries N6,N6-dimethyllysine; alternate. The residue at position 317 (Lys317) is an N6-methyllysine; alternate. N6-methyllysine is present on Lys391.

This sequence belongs to the TRAFAC class translation factor GTPase superfamily. Classic translation factor GTPase family. EF-Tu/EF-1A subfamily.

Its subcellular location is the cytoplasm. Functionally, this protein promotes the GTP-dependent binding of aminoacyl-tRNA to the A-site of ribosomes during protein biosynthesis. This Aspergillus oryzae (strain ATCC 42149 / RIB 40) (Yellow koji mold) protein is Elongation factor 1-alpha (tef1).